We begin with the raw amino-acid sequence, 60 residues long: Large ribosomal subunit protein bL32 (60 aa).

A disordered region spans residues 1–44 (MAVQQNKKSRSARDMRRSHDALSENALSVEKTTGEVHLRHHVSP). The segment covering 11-22 (SARDMRRSHDAL) has biased composition (basic and acidic residues).

This sequence belongs to the bacterial ribosomal protein bL32 family.

The polypeptide is Large ribosomal subunit protein bL32 (Pseudomonas putida (strain W619)).